The chain runs to 453 residues: Glutamyl-tRNA(Gln) amidotransferase subunit A (453 aa).

Catalysis depends on charge relay system residues K56 and S131. The active-site Acyl-ester intermediate is the S155.

This sequence belongs to the amidase family. GatA subfamily. In terms of assembly, heterotrimer of A, B and C subunits.

It catalyses the reaction L-glutamyl-tRNA(Gln) + L-glutamine + ATP + H2O = L-glutaminyl-tRNA(Gln) + L-glutamate + ADP + phosphate + H(+). In terms of biological role, allows the formation of correctly charged Gln-tRNA(Gln) through the transamidation of misacylated Glu-tRNA(Gln) in organisms which lack glutaminyl-tRNA synthetase. The reaction takes place in the presence of glutamine and ATP through an activated gamma-phospho-Glu-tRNA(Gln). This Campylobacter jejuni (strain RM1221) protein is Glutamyl-tRNA(Gln) amidotransferase subunit A.